The chain runs to 112 residues: Nucleoid-associated protein CPR_0056 (112 aa).

Residues 91-100 (ASEETSEKMG) are compositionally biased toward basic and acidic residues. The tract at residues 91–112 (ASEETSEKMGKLTGGMGMPGLF) is disordered. The segment covering 102 to 112 (LTGGMGMPGLF) has biased composition (gly residues).

It belongs to the YbaB/EbfC family. As to quaternary structure, homodimer.

Its subcellular location is the cytoplasm. The protein resides in the nucleoid. Its function is as follows. Binds to DNA and alters its conformation. May be involved in regulation of gene expression, nucleoid organization and DNA protection. This Clostridium perfringens (strain SM101 / Type A) protein is Nucleoid-associated protein CPR_0056.